Reading from the N-terminus, the 238-residue chain is Tyrosine recombinase XerD-like (238 aa).

Residues 1-75 (MKLPNEIDEY…SANQYLLFLY (75 aa)) enclose the Core-binding (CB) domain. Residues 90–238 (VQKKSQTAQS…TITTLEKYYR (149 aa)) enclose the Tyr recombinase domain. Residues K154 and R204 contribute to the active site. The O-(3'-phospho-DNA)-tyrosine intermediate role is filled by Y236.

It belongs to the 'phage' integrase family. XerD-like subfamily.

It localises to the cytoplasm. In terms of biological role, putative tyrosine recombinase. Not involved in the cutting and rejoining of the recombining DNA molecules on dif(SL) site. This chain is Tyrosine recombinase XerD-like (ynbA), found in Lactococcus lactis subsp. lactis (strain IL1403) (Streptococcus lactis).